The primary structure comprises 638 residues: Chaperone protein DnaK 2 (638 aa).

T199 carries the phosphothreonine; by autocatalysis modification. Residues A604–V626 form a disordered region. Over residues E613–D624 the composition is skewed to low complexity.

Belongs to the heat shock protein 70 family.

Acts as a chaperone. This Colwellia psychrerythraea (strain 34H / ATCC BAA-681) (Vibrio psychroerythus) protein is Chaperone protein DnaK 2.